Consider the following 294-residue polypeptide: tRNA pseudouridine synthase B (294 aa).

The active-site Nucleophile is the Asp38.

Belongs to the pseudouridine synthase TruB family. Type 1 subfamily.

The catalysed reaction is uridine(55) in tRNA = pseudouridine(55) in tRNA. Responsible for synthesis of pseudouridine from uracil-55 in the psi GC loop of transfer RNAs. The polypeptide is tRNA pseudouridine synthase B (Clostridium perfringens (strain SM101 / Type A)).